A 49-amino-acid chain; its full sequence is Small ribosomal subunit protein eS31 (49 aa).

4 residues coordinate Zn(2+): C21, C24, C39, and C42. The C4-type zinc finger occupies 21 to 42 (CPRCGNGVFLAEHEDRMSCGRC).

It belongs to the eukaryotic ribosomal protein eS31 family. As to quaternary structure, part of the 30S ribosomal subunit. It depends on Zn(2+) as a cofactor.

The chain is Small ribosomal subunit protein eS31 from Methanothrix thermoacetophila (strain DSM 6194 / JCM 14653 / NBRC 101360 / PT) (Methanosaeta thermophila).